The primary structure comprises 219 residues: Transmembrane protein 247 (219 aa).

Composition is skewed to basic and acidic residues over residues 1 to 10 (MAAEDREMME) and 29 to 45 (SKSE…ESQK). The disordered stretch occupies residues 1 to 101 (MAAEDREMME…LPPTPGTERN (101 aa)). The stretch at 121 to 156 (LHEKNQRQRQHEVVMEQLQRERQHEVVMEQLQQEAA) forms a coiled coil. 2 helical membrane-spanning segments follow: residues 167 to 187 (FLLP…IHII) and 194 to 214 (VFFL…LCLI).

The protein resides in the membrane. The chain is Transmembrane protein 247 (TMEM247) from Homo sapiens (Human).